The primary structure comprises 806 residues: Leucine--tRNA ligase (806 aa).

A 'HIGH' region motif is present at residues 40 to 51; it reads PYPSGKGLHVGH. The 'KMSKS' region signature appears at 580 to 584; sequence KMSKS. Lysine 583 contributes to the ATP binding site.

The protein belongs to the class-I aminoacyl-tRNA synthetase family.

The protein localises to the cytoplasm. The catalysed reaction is tRNA(Leu) + L-leucine + ATP = L-leucyl-tRNA(Leu) + AMP + diphosphate. In Ureaplasma parvum serovar 3 (strain ATCC 27815 / 27 / NCTC 11736), this protein is Leucine--tRNA ligase.